The sequence spans 164 residues: Lipoprotein signal peptidase (164 aa).

4 helical membrane passes run leucine 6–leucine 26, valine 39–serine 59, glycine 65–alanine 85, and threonine 88–isoleucine 108. Residues aspartate 118 and aspartate 140 contribute to the active site. The chain crosses the membrane as a helical span at residues valine 141–alanine 161.

The protein belongs to the peptidase A8 family.

The protein resides in the cell inner membrane. The catalysed reaction is Release of signal peptides from bacterial membrane prolipoproteins. Hydrolyzes -Xaa-Yaa-Zaa-|-(S,diacylglyceryl)Cys-, in which Xaa is hydrophobic (preferably Leu), and Yaa (Ala or Ser) and Zaa (Gly or Ala) have small, neutral side chains.. It functions in the pathway protein modification; lipoprotein biosynthesis (signal peptide cleavage). Its function is as follows. This protein specifically catalyzes the removal of signal peptides from prolipoproteins. The protein is Lipoprotein signal peptidase of Rhodopseudomonas palustris (strain ATCC BAA-98 / CGA009).